A 266-amino-acid polypeptide reads, in one-letter code: F-box only protein 50 (266 aa).

The segment covering 1–16 (MEKTQDRDTLSGRMEA) has biased composition (basic and acidic residues). The segment at 1–53 (MEKTQDRDTLSGRMEAEGSLNSEELPPHPQSPPPPPSPRSPTSPVTPELPQPN) is disordered. Residues 27–41 (PHPQSPPPPPSPRSP) are compositionally biased toward pro residues. Residues Ser31, Ser37, Ser40, and Ser43 each carry the phosphoserine modification. Residue Thr46 is modified to Phosphothreonine. One can recognise an FBA domain in the interval 86 to 264 (LFLERPLYRN…VTDSSVSVQL (179 aa)).

Strongly expressed in kidney. Weakly expressed in stomach, colon, duodenum and prostate.

The protein localises to the cytoplasm. Promotes cell proliferation. In Mus musculus (Mouse), this protein is F-box only protein 50 (Nccrp1).